The primary structure comprises 119 residues: Myohemerythrin-1 (119 aa).

The Fe cation site is built by H25, H55, N58, E59, H74, H78, H107, and D112.

The protein belongs to the hemerythrin family. In terms of assembly, monomer. In terms of tissue distribution, muscle.

Functionally, myohemerythrin is an oxygen-binding protein found in the retractor muscles of certain worms. The oxygen-binding site contains two iron atoms. The protein is Myohemerythrin-1 of Phascolopsis gouldii (Peanut worm).